The chain runs to 450 residues: Phosphoglucosamine mutase (450 aa).

S101 serves as the catalytic Phosphoserine intermediate. Mg(2+) is bound by residues S101, D240, D242, and D244. S101 carries the post-translational modification Phosphoserine.

The protein belongs to the phosphohexose mutase family. It depends on Mg(2+) as a cofactor. Post-translationally, activated by phosphorylation.

It catalyses the reaction alpha-D-glucosamine 1-phosphate = D-glucosamine 6-phosphate. Catalyzes the conversion of glucosamine-6-phosphate to glucosamine-1-phosphate. This chain is Phosphoglucosamine mutase, found in Streptococcus pneumoniae (strain JJA).